We begin with the raw amino-acid sequence, 91 residues long: MAHKKAGGSSRNGRDSEAKRLGVKVYGSELIPAGSIIVRQRGTKFHAGENVGQGKDHTLFAKVDGYVEFTVKGAQQRKTVNVVPYTGVDGE.

The protein belongs to the bacterial ribosomal protein bL27 family.

This Chromobacterium violaceum (strain ATCC 12472 / DSM 30191 / JCM 1249 / CCUG 213 / NBRC 12614 / NCIMB 9131 / NCTC 9757 / MK) protein is Large ribosomal subunit protein bL27.